Consider the following 441-residue polypeptide: Glutamate--tRNA ligase 1 (441 aa).

Positions 9–19 (PSPTGFIHVGN) match the 'HIGH' region motif. The 'KMSKS' region signature appears at 239-243 (ALSKR). Lys-242 provides a ligand contact to ATP.

It belongs to the class-I aminoacyl-tRNA synthetase family. Glutamate--tRNA ligase type 1 subfamily. Monomer.

Its subcellular location is the cytoplasm. The enzyme catalyses tRNA(Glu) + L-glutamate + ATP = L-glutamyl-tRNA(Glu) + AMP + diphosphate. Functionally, catalyzes the attachment of glutamate to tRNA(Glu) in a two-step reaction: glutamate is first activated by ATP to form Glu-AMP and then transferred to the acceptor end of tRNA(Glu). This is Glutamate--tRNA ligase 1 from Cereibacter sphaeroides (strain ATCC 17025 / ATH 2.4.3) (Rhodobacter sphaeroides).